The following is a 354-amino-acid chain: Protein-arginine kinase (354 aa).

Residues 24–254 form the Phosphagen kinase C-terminal domain; sequence IVLSSRIRLA…QQIIQQEKMA (231 aa). Residues 27 to 31, H92, R125, 176 to 180, and 207 to 212 each bind ATP; these read SSRIR, RASVM, and RGIYGE. Residues 337-342 carry the RDXXRA motif of the pArg binding pocket involved in allosteric regulation motif; it reads RDYRRA.

It belongs to the ATP:guanido phosphotransferase family.

The catalysed reaction is L-arginyl-[protein] + ATP = N(omega)-phospho-L-arginyl-[protein] + ADP + H(+). Appears to be allosterically activated by the binding of pArg-containing polypeptides to the pArg-binding pocket localized in the C-terminal domain of McsB. In terms of biological role, catalyzes the specific phosphorylation of arginine residues in a large number of proteins. Is part of the bacterial stress response system. Protein arginine phosphorylation has a physiologically important role and is involved in the regulation of many critical cellular processes, such as protein homeostasis, motility, competence, and stringent and stress responses, by regulating gene expression and protein activity. This Bacillus cereus (strain AH187) protein is Protein-arginine kinase.